The following is a 261-amino-acid chain: NAD-capped RNA hydrolase NudC (261 aa).

Residues K25 and R69 each contribute to the substrate site. Zn(2+) is bound by residues C98 and C101. Position 111 (E111) interacts with substrate. Zn(2+) contacts are provided by C116 and C119. Y124 is a substrate binding site. The 124-residue stretch at 125–248 (PQIAPCVIVA…TVARRLIEDT (124 aa)) folds into the Nudix hydrolase domain. Residues A158, E174, and E178 each contribute to the a divalent metal cation site. A Nudix box motif is present at residues 159 to 180 (GFVEVGETLEQAVSREVLEESN). 192 to 199 (QPWPFPHS) contacts substrate. E219 is an a divalent metal cation binding site. A241 provides a ligand contact to substrate.

Belongs to the Nudix hydrolase family. NudC subfamily. As to quaternary structure, homodimer. Requires Mg(2+) as cofactor. The cofactor is Mn(2+). Zn(2+) serves as cofactor.

The catalysed reaction is a 5'-end NAD(+)-phospho-ribonucleoside in mRNA + H2O = a 5'-end phospho-adenosine-phospho-ribonucleoside in mRNA + beta-nicotinamide D-ribonucleotide + 2 H(+). It catalyses the reaction NAD(+) + H2O = beta-nicotinamide D-ribonucleotide + AMP + 2 H(+). It carries out the reaction NADH + H2O = reduced beta-nicotinamide D-ribonucleotide + AMP + 2 H(+). MRNA decapping enzyme that specifically removes the nicotinamide adenine dinucleotide (NAD) cap from a subset of mRNAs by hydrolyzing the diphosphate linkage to produce nicotinamide mononucleotide (NMN) and 5' monophosphate mRNA. The NAD-cap is present at the 5'-end of some mRNAs and stabilizes RNA against 5'-processing. Has preference for mRNAs with a 5'-end purine. Catalyzes the hydrolysis of a broad range of dinucleotide pyrophosphates. The sequence is that of NAD-capped RNA hydrolase NudC from Yersinia enterocolitica serotype O:8 / biotype 1B (strain NCTC 13174 / 8081).